A 98-amino-acid chain; its full sequence is Large ribosomal subunit protein uL23 (98 aa).

It belongs to the universal ribosomal protein uL23 family. Part of the 50S ribosomal subunit. Contacts protein L29, and trigger factor when it is bound to the ribosome.

Its function is as follows. One of the early assembly proteins it binds 23S rRNA. One of the proteins that surrounds the polypeptide exit tunnel on the outside of the ribosome. Forms the main docking site for trigger factor binding to the ribosome. This is Large ribosomal subunit protein uL23 from Maricaulis maris (strain MCS10) (Caulobacter maris).